The following is a 340-amino-acid chain: Probable dual-specificity RNA methyltransferase RlmN (340 aa).

Glutamate 90 functions as the Proton acceptor in the catalytic mechanism. One can recognise a Radical SAM core domain in the interval 97–325 (QVSRKTACLS…PVTRRYQRGN (229 aa)). The cysteines at positions 104 and 331 are disulfide-linked. Positions 111, 115, and 118 each coordinate [4Fe-4S] cluster. S-adenosyl-L-methionine contacts are provided by residues 157–158 (GE), serine 189, 212–214 (SLT), and asparagine 288. Cysteine 331 (S-methylcysteine intermediate) is an active-site residue.

This sequence belongs to the radical SAM superfamily. RlmN family. The cofactor is [4Fe-4S] cluster.

The protein localises to the cytoplasm. The catalysed reaction is adenosine(2503) in 23S rRNA + 2 reduced [2Fe-2S]-[ferredoxin] + 2 S-adenosyl-L-methionine = 2-methyladenosine(2503) in 23S rRNA + 5'-deoxyadenosine + L-methionine + 2 oxidized [2Fe-2S]-[ferredoxin] + S-adenosyl-L-homocysteine. It catalyses the reaction adenosine(37) in tRNA + 2 reduced [2Fe-2S]-[ferredoxin] + 2 S-adenosyl-L-methionine = 2-methyladenosine(37) in tRNA + 5'-deoxyadenosine + L-methionine + 2 oxidized [2Fe-2S]-[ferredoxin] + S-adenosyl-L-homocysteine. Specifically methylates position 2 of adenine 2503 in 23S rRNA and position 2 of adenine 37 in tRNAs. In Treponema pallidum (strain Nichols), this protein is Probable dual-specificity RNA methyltransferase RlmN.